The following is a 175-amino-acid chain: Interferon a3 (175 aa).

The first 23 residues, 1–23 (MYTMQSWSCIFLIICSMQSVCHC), serve as a signal peptide directing secretion. The cysteines at positions 24 and 120 are disulfide-linked.

This sequence belongs to the alpha/beta interferon family. As to expression, isoform 1 and isoform 2 are expressed in several tissues, including gill, spleen, intestine, kidney and skin.

It is found in the secreted. Its subcellular location is the cytoplasm. It localises to the cytosol. Its function is as follows. Key player in antiviral response. Induces expression of TLRs, including that of TLR3, TLR9 and TLR8a1, and that of cytosolic pattern recognition receptors, including RIGI, IFIH1/MDA5 and DHX58/LGP2. Also induces MX1 and its own expression. In the presence of intracellular IFNAR2 (iIFNAR2) and IFNAR1B, intracellular isoform 3 may mediate STAT1 and STAT2 phosphorylation and induction of EIF2AK2, MX1 and RSAD2. In Oncorhynchus mykiss (Rainbow trout), this protein is Interferon a3.